Consider the following 191-residue polypeptide: uncharacterized protein (191 aa).

This is an uncharacterized protein from Archaeoglobus fulgidus (strain ATCC 49558 / DSM 4304 / JCM 9628 / NBRC 100126 / VC-16).